Here is a 107-residue protein sequence, read N- to C-terminus: Thioredoxin (107 aa).

Positions 2 to 107 (DSIVHVTDDS…QLTAFLDSNX (106 aa)) constitute a Thioredoxin domain. Cys-32 and Cys-35 are oxidised to a cystine.

It belongs to the thioredoxin family.

Its function is as follows. Participates in various redox reactions through the reversible oxidation of its active center dithiol to a disulfide and catalyzes dithiol-disulfide exchange reactions. This is Thioredoxin (trxA) from Allochromatium vinosum (Chromatium vinosum).